Reading from the N-terminus, the 490-residue chain is Tektin-3 (490 aa).

Residues T7, T9, and T11 are each glycosylated (O-linked (GalNAc...) threonine). N-linked (GlcNAc...) asparagine glycosylation is found at N41, N86, N111, and N276. Positions 415–461 (MAQLRLVNEVYEVDETIQTLQQRLRDSEDTLQSLAHTKATLEHDLAV) form a coiled coil.

Belongs to the tektin family. Microtubule inner protein component of sperm flagellar doublet microtubules. Interacts with TEKT1, TEKT2, TEKT4 and TEKT5. Interacts with CCDC38. In terms of processing, N- and O-glycosylated. Post-translationally, ubiquitinated, leading to its degradation. Deubiquitinated by USP16, promoting its stability. May be proteolytically processed during the epididymal transit of spermatozoa. Expressed preferentially in testis. Expressed predominantly in late pachytene spermatocytes and early round spermatids. Expressed in spermatozoa.

It localises to the cytoplasm. The protein localises to the cytoskeleton. It is found in the cilium axoneme. Its subcellular location is the flagellum axoneme. The protein resides in the cytoplasmic vesicle. It localises to the secretory vesicle. The protein localises to the acrosome outer membrane. Its function is as follows. Microtubule inner protein (MIP) part of the dynein-decorated doublet microtubules (DMTs) in cilia and flagellar axoneme. Forms filamentous polymers in the walls of ciliary and flagellar microtubules. Required for normal sperm mobility. The chain is Tektin-3 (Tekt3) from Mus musculus (Mouse).